The primary structure comprises 287 residues: ATP synthase subunit a (287 aa).

Transmembrane regions (helical) follow at residues 37–57 (LDSV…MWLA), 96–116 (FIAP…AMDL), 144–164 (DLST…VYSI), 187–207 (PVFA…EYVA), 224–244 (ELVF…LSGV), and 266–286 (TLQA…AHEA).

It belongs to the ATPase A chain family. In terms of assembly, F-type ATPases have 2 components, CF(1) - the catalytic core - and CF(0) - the membrane proton channel. CF(1) has five subunits: alpha(3), beta(3), gamma(1), delta(1), epsilon(1). CF(0) has three main subunits: a(1), b(2) and c(9-12). The alpha and beta chains form an alternating ring which encloses part of the gamma chain. CF(1) is attached to CF(0) by a central stalk formed by the gamma and epsilon chains, while a peripheral stalk is formed by the delta and b chains.

The protein resides in the cell inner membrane. In terms of biological role, key component of the proton channel; it plays a direct role in the translocation of protons across the membrane. The chain is ATP synthase subunit a from Acidovorax ebreus (strain TPSY) (Diaphorobacter sp. (strain TPSY)).